A 350-amino-acid polypeptide reads, in one-letter code: 3-isopropylmalate dehydrogenase (350 aa).

76 to 87 contributes to the NAD(+) binding site; that stretch reads GPKWDNAPKRPE. Positions 94, 104, 132, and 217 each coordinate substrate. Residues aspartate 217, aspartate 241, and aspartate 245 each contribute to the Mg(2+) site. NAD(+) is bound at residue 275-287; sequence GSAPDIANQNIAN.

Belongs to the isocitrate and isopropylmalate dehydrogenases family. LeuB type 1 subfamily. Homodimer. Requires Mg(2+) as cofactor. Mn(2+) serves as cofactor.

Its subcellular location is the cytoplasm. The catalysed reaction is (2R,3S)-3-isopropylmalate + NAD(+) = 4-methyl-2-oxopentanoate + CO2 + NADH. It functions in the pathway amino-acid biosynthesis; L-leucine biosynthesis; L-leucine from 3-methyl-2-oxobutanoate: step 3/4. In terms of biological role, catalyzes the oxidation of 3-carboxy-2-hydroxy-4-methylpentanoate (3-isopropylmalate) to 3-carboxy-4-methyl-2-oxopentanoate. The product decarboxylates to 4-methyl-2 oxopentanoate. The polypeptide is 3-isopropylmalate dehydrogenase (Listeria monocytogenes serotype 4b (strain F2365)).